The following is a 227-amino-acid chain: Cytochrome c oxidase subunit 2 (227 aa).

The Mitochondrial intermembrane portion of the chain corresponds to 1-14 (MAYPMQLGLQDATS). A helical membrane pass occupies residues 15-45 (PIMEELTDFHDHTLMIVFLISTLVLYIISMM). Topologically, residues 46–59 (LTTKLTHTSTMDAQ) are mitochondrial matrix. A helical transmembrane segment spans residues 60 to 87 (EVETIWTVLPAVILVMIALPSLRILYMM). Residues 88-227 (DEINDPYLTV…QFESWASSMT (140 aa)) lie on the Mitochondrial intermembrane side of the membrane. His-161, Cys-196, Glu-198, Cys-200, His-204, and Met-207 together coordinate Cu cation. Residue Glu-198 coordinates Mg(2+).

This sequence belongs to the cytochrome c oxidase subunit 2 family. Component of the cytochrome c oxidase (complex IV, CIV), a multisubunit enzyme composed of 14 subunits. The complex is composed of a catalytic core of 3 subunits MT-CO1, MT-CO2 and MT-CO3, encoded in the mitochondrial DNA, and 11 supernumerary subunits COX4I, COX5A, COX5B, COX6A, COX6B, COX6C, COX7A, COX7B, COX7C, COX8 and NDUFA4, which are encoded in the nuclear genome. The complex exists as a monomer or a dimer and forms supercomplexes (SCs) in the inner mitochondrial membrane with NADH-ubiquinone oxidoreductase (complex I, CI) and ubiquinol-cytochrome c oxidoreductase (cytochrome b-c1 complex, complex III, CIII), resulting in different assemblies (supercomplex SCI(1)III(2)IV(1) and megacomplex MCI(2)III(2)IV(2)). Found in a complex with TMEM177, COA6, COX18, COX20, SCO1 and SCO2. Interacts with TMEM177 in a COX20-dependent manner. Interacts with COX20. Interacts with COX16. The cofactor is Cu cation.

It is found in the mitochondrion inner membrane. It carries out the reaction 4 Fe(II)-[cytochrome c] + O2 + 8 H(+)(in) = 4 Fe(III)-[cytochrome c] + 2 H2O + 4 H(+)(out). Functionally, component of the cytochrome c oxidase, the last enzyme in the mitochondrial electron transport chain which drives oxidative phosphorylation. The respiratory chain contains 3 multisubunit complexes succinate dehydrogenase (complex II, CII), ubiquinol-cytochrome c oxidoreductase (cytochrome b-c1 complex, complex III, CIII) and cytochrome c oxidase (complex IV, CIV), that cooperate to transfer electrons derived from NADH and succinate to molecular oxygen, creating an electrochemical gradient over the inner membrane that drives transmembrane transport and the ATP synthase. Cytochrome c oxidase is the component of the respiratory chain that catalyzes the reduction of oxygen to water. Electrons originating from reduced cytochrome c in the intermembrane space (IMS) are transferred via the dinuclear copper A center (CU(A)) of subunit 2 and heme A of subunit 1 to the active site in subunit 1, a binuclear center (BNC) formed by heme A3 and copper B (CU(B)). The BNC reduces molecular oxygen to 2 water molecules using 4 electrons from cytochrome c in the IMS and 4 protons from the mitochondrial matrix. The protein is Cytochrome c oxidase subunit 2 (MT-CO2) of Cratogeomys bursarius (Plains pocket gopher).